Here is a 1487-residue protein sequence, read N- to C-terminus: Collagen alpha-1(II) chain (1487 aa).

The signal sequence occupies residues 1–25 (MIRLGAPQSLVLLTLLIAAVLRCQG). Residues 26–181 (QDAQEAGSCL…PGLSAGNFAA (156 aa)) constitute a propeptide, N-terminal propeptide. The VWFC domain occupies 32–89 (GSCLQNGQRYKDKDVWKPSSCRICVCDTGNVLCDDIICEDPDCLNPEIPFGECCPICP). Residues 96–179 (SGKLGPKGQK…GPPGLSAGNF (84 aa)) form a disordered region. Composition is skewed to basic and acidic residues over residues 104–115 (QKGEPGDIRDII) and 132–153 (PRGD…RDGE). The span at 157-172 (PGNPGPAGPPGPPGPP) shows a compositional bias: pro residues. K190 is subject to 5-hydroxylysine. Residue K190 is glycosylated (O-linked (Gal...) hydroxylysine). The tract at residues 191–1237 (AGGAQMGVMQ…QREKGPDPMQ (1047 aa)) is disordered. Residues 192–203 (GGAQMGVMQGPM) show a composition bias toward low complexity. The segment at 201 to 1214 (GPMGPMGPRG…PGPPGPPGPP (1014 aa)) is triple-helical region. The span at 208-217 (PRGPPGPAGA) shows a compositional bias: pro residues. Residues 218–239 (PGPQGFQGNPGEPGEPGVSGPM) show a composition bias toward low complexity. A compositionally biased stretch (basic and acidic residues) spans 251-265 (PGDDGEAGKPGKSGE). 5-hydroxylysine is present on residues K287, K299, and K308. Residues K287, K299, and K308 are each glycosylated (O-linked (Gal...) hydroxylysine). Low complexity-rich tracts occupy residues 310 to 320 (ESGSPGENGSP) and 335 to 350 (TGPA…DGQP). Gly residues predominate over residues 360 to 369 (GPAGGPGFPG). 2 stretches are compositionally biased toward low complexity: residues 370 to 382 (APGA…PTGA) and 403 to 431 (PAGA…AGAP). A 5-hydroxylysine modification is found at K374. An O-linked (Gal...) hydroxylysine glycan is attached at K374. Over residues 433 to 442 (FPGPRGPPGP) the composition is skewed to pro residues. Residues 472–485 (ETGPAGPQGAPGPA) are compositionally biased toward low complexity. A 5-hydroxylysine mark is found at K608 and K620. O-linked (Gal...) hydroxylysine glycans are attached at residues K608 and K620. A compositionally biased stretch (low complexity) spans 622–631 (LAGAPGLRGL). 4-hydroxyproline is present on residues P659 and P668. Position 670 is a 3-hydroxyproline (P670). 2 positions are modified to 4-hydroxyproline: P671 and P674. Residues 706 to 736 (ERGSPGAQGLQGPRGLPGTPGTDGPKGAAGP) show a composition bias toward low complexity. Basic and acidic residues predominate over residues 764 to 775 (KGDRGDVGEKGP). Low complexity-rich tracts occupy residues 833–848 (AGFA…PGAK) and 877–914 (PTGV…NGNP). A 3-hydroxyproline modification is found at P907. A 4-hydroxyproline mark is found at P908, P914, and P920. Residues 962 to 980 (DGPSGLDGPPGPQGLAGQR) show a composition bias toward low complexity. Residues 1069-1079 (APGPPGSPGPA) show a composition bias toward pro residues. The segment covering 1115-1129 (RGDKGESGEQGERGL) has biased composition (basic and acidic residues). The residue at position 1144 (P1144) is a 3-hydroxyproline. Composition is skewed to low complexity over residues 1148 to 1157 (SGDQGASGPA) and 1171 to 1181 (PSGKDGSNGIP). P1181 carries the post-translational modification 4-hydroxyproline. Residue P1186 is modified to 3-hydroxyproline. P1187 is modified (4-hydroxyproline). A compositionally biased stretch (pro residues) spans 1199 to 1216 (VGPPGSPGPPGPPGPPGP). P1201 is modified (3-hydroxyproline). 4-hydroxyproline occurs at positions 1202 and 1205. P1207 is modified (3-hydroxyproline). A 4-hydroxyproline mark is found at P1208 and P1211. The residue at position 1213 (P1213) is a 3-hydroxyproline. A 4-hydroxyproline modification is found at P1214. The tract at residues 1215–1241 (GPGIDMSAFAGLGQREKGPDPMQYMRA) is nonhelical region (C-terminal). Positions 1253–1487 (VEVDATLKSL…GVDIGPVCFL (235 aa)) constitute a Fibrillar collagen NC1 domain. 3 disulfide bridges follow: C1283–C1315, C1323–C1485, and C1393–C1438. 5 residues coordinate Ca(2+): D1301, N1303, Q1304, C1306, and D1309.

It belongs to the fibrillar collagen family. As to quaternary structure, homotrimers of alpha 1(II) chains. Contains mostly 4-hydroxyproline. Prolines at the third position of the tripeptide repeating unit (G-X-P) are 4-hydroxylated in some or all of the chains. In terms of processing, contains 3-hydroxyproline at a few sites. This modification occurs on the first proline residue in the sequence motif Gly-Pro-Hyp, where Hyp is 4-hydroxyproline. Post-translationally, lysine residues at the third position of the tripeptide repeating unit (G-X-Y) are 5-hydroxylated in some or all of the chains. O-glycosylated on hydroxylated lysine residues. The O-linked glycan consists of a Glc-Gal disaccharide.

The protein resides in the secreted. It localises to the extracellular space. The protein localises to the extracellular matrix. In terms of biological role, type II collagen is specific for cartilaginous tissues. It is essential for the normal embryonic development of the skeleton, for linear growth and for the ability of cartilage to resist compressive forces. This is Collagen alpha-1(II) chain from Mus musculus (Mouse).